The chain runs to 112 residues: Nitrogen regulatory protein GlnK2 (112 aa).

Residues threonine 29, 37-39, valine 64, and 87-90 each bind ADP; these read GVQ and GDGK. ATP-binding positions include threonine 29, 37 to 39, valine 64, and 87 to 90; these read GVQ and GDGK.

The protein belongs to the P(II) protein family. In terms of assembly, homotrimer. Interacts and forms a complex with Amt2.

It localises to the cytoplasm. Its function is as follows. Involved in the regulation of nitrogen metabolism. Regulates the activity of its targets by protein-protein interaction in response to the nitrogen status of the cell. Regulates the activity of the ammonia channel Amt2 via direct interaction. The polypeptide is Nitrogen regulatory protein GlnK2 (Methanocaldococcus jannaschii (strain ATCC 43067 / DSM 2661 / JAL-1 / JCM 10045 / NBRC 100440) (Methanococcus jannaschii)).